The chain runs to 122 residues: uncharacterized protein (122 aa).

Residues 46–116 adopt a coiled-coil conformation; it reads KDLQKEVDDL…HQLENKRELN (71 aa).

This is an uncharacterized protein from Invertebrate iridescent virus 6 (IIV-6).